Here is a 370-residue protein sequence, read N- to C-terminus: Ferrochelatase (370 aa).

Positions 210 and 291 each coordinate Fe cation.

It belongs to the ferrochelatase family.

Its subcellular location is the cytoplasm. It carries out the reaction heme b + 2 H(+) = protoporphyrin IX + Fe(2+). It participates in porphyrin-containing compound metabolism; protoheme biosynthesis; protoheme from protoporphyrin-IX: step 1/1. In terms of biological role, catalyzes the ferrous insertion into protoporphyrin IX. In Marinobacter nauticus (strain ATCC 700491 / DSM 11845 / VT8) (Marinobacter aquaeolei), this protein is Ferrochelatase.